Consider the following 301-residue polypeptide: Aspartate carbamoyltransferase catalytic subunit (301 aa).

The carbamoyl phosphate site is built by R46 and T47. K74 provides a ligand contact to L-aspartate. 3 residues coordinate carbamoyl phosphate: R96, H124, and Q127. R157 and R208 together coordinate L-aspartate. Carbamoyl phosphate is bound by residues A249 and P250.

This sequence belongs to the aspartate/ornithine carbamoyltransferase superfamily. ATCase family. Heterododecamer (2C3:3R2) of six catalytic PyrB chains organized as two trimers (C3), and six regulatory PyrI chains organized as three dimers (R2).

The catalysed reaction is carbamoyl phosphate + L-aspartate = N-carbamoyl-L-aspartate + phosphate + H(+). The protein operates within pyrimidine metabolism; UMP biosynthesis via de novo pathway; (S)-dihydroorotate from bicarbonate: step 2/3. Catalyzes the condensation of carbamoyl phosphate and aspartate to form carbamoyl aspartate and inorganic phosphate, the committed step in the de novo pyrimidine nucleotide biosynthesis pathway. The protein is Aspartate carbamoyltransferase catalytic subunit of Bacillus cereus (strain ATCC 14579 / DSM 31 / CCUG 7414 / JCM 2152 / NBRC 15305 / NCIMB 9373 / NCTC 2599 / NRRL B-3711).